Reading from the N-terminus, the 103-residue chain is Large ribosomal subunit protein bL21 (103 aa).

Belongs to the bacterial ribosomal protein bL21 family. In terms of assembly, part of the 50S ribosomal subunit. Contacts protein L20.

In terms of biological role, this protein binds to 23S rRNA in the presence of protein L20. This is Large ribosomal subunit protein bL21 from Methylibium petroleiphilum (strain ATCC BAA-1232 / LMG 22953 / PM1).